Consider the following 202-residue polypeptide: MSRFAKVERKTKESDIVVELDLDGTGQVSIDTGVPFFDHMLTSLGTHASFDLTVKAVGDIEIEGHHTIEDTSIVLGQALAQALGDKKGIRRFGDAFIPMDECLAHAAVDVSGRPYFVHTGEPDYMVQFTIAGSAAPYHTVVNRHVFESLAYNARIALHVRTLYGRDPHHITEAEYKAVARALRQAVEYDPRVTGVPSTKGTL.

Belongs to the imidazoleglycerol-phosphate dehydratase family.

It is found in the cytoplasm. The enzyme catalyses D-erythro-1-(imidazol-4-yl)glycerol 3-phosphate = 3-(imidazol-4-yl)-2-oxopropyl phosphate + H2O. Its pathway is amino-acid biosynthesis; L-histidine biosynthesis; L-histidine from 5-phospho-alpha-D-ribose 1-diphosphate: step 6/9. This Mycolicibacterium gilvum (strain PYR-GCK) (Mycobacterium gilvum (strain PYR-GCK)) protein is Imidazoleglycerol-phosphate dehydratase.